Here is a 501-residue protein sequence, read N- to C-terminus: 2,3-bisphosphoglycerate-independent phosphoglycerate mutase (501 aa).

Residues Asp12 and Ser62 each contribute to the Mn(2+) site. Ser62 functions as the Phosphoserine intermediate in the catalytic mechanism. Substrate is bound by residues His121, 150 to 151 (RD), Arg182, Arg188, 253 to 256 (RSDR), and Lys322. Positions 389, 393, 430, 431, and 449 each coordinate Mn(2+).

Belongs to the BPG-independent phosphoglycerate mutase family. Monomer. Requires Mn(2+) as cofactor.

It carries out the reaction (2R)-2-phosphoglycerate = (2R)-3-phosphoglycerate. It participates in carbohydrate degradation; glycolysis; pyruvate from D-glyceraldehyde 3-phosphate: step 3/5. In terms of biological role, catalyzes the interconversion of 2-phosphoglycerate and 3-phosphoglycerate. This Ehrlichia ruminantium (strain Gardel) protein is 2,3-bisphosphoglycerate-independent phosphoglycerate mutase.